The primary structure comprises 87 residues: Large ribosomal subunit protein bL27 (87 aa).

This sequence belongs to the bacterial ribosomal protein bL27 family.

The chain is Large ribosomal subunit protein bL27 from Pseudarthrobacter chlorophenolicus (strain ATCC 700700 / DSM 12829 / CIP 107037 / JCM 12360 / KCTC 9906 / NCIMB 13794 / A6) (Arthrobacter chlorophenolicus).